Consider the following 175-residue polypeptide: uncharacterized protein (175 aa).

Positions 107–138 form a coiled coil; sequence KTEEEAEKTLQEIERKIFKKLWENLDKERKRE.

This is an uncharacterized protein from Aquifex aeolicus (strain VF5).